We begin with the raw amino-acid sequence, 445 residues long: ATP-dependent protease ATPase subunit HslU (445 aa).

Residues V18, 60–65, D254, E319, and R391 contribute to the ATP site; that span reads GVGKTE.

It belongs to the ClpX chaperone family. HslU subfamily. As to quaternary structure, a double ring-shaped homohexamer of HslV is capped on each side by a ring-shaped HslU homohexamer. The assembly of the HslU/HslV complex is dependent on binding of ATP.

It localises to the cytoplasm. ATPase subunit of a proteasome-like degradation complex; this subunit has chaperone activity. The binding of ATP and its subsequent hydrolysis by HslU are essential for unfolding of protein substrates subsequently hydrolyzed by HslV. HslU recognizes the N-terminal part of its protein substrates and unfolds these before they are guided to HslV for hydrolysis. The protein is ATP-dependent protease ATPase subunit HslU of Alcanivorax borkumensis (strain ATCC 700651 / DSM 11573 / NCIMB 13689 / SK2).